We begin with the raw amino-acid sequence, 601 residues long: DnaJ-like protein MG200 (601 aa).

A J domain is found at Lys-5–Gly-77. Disordered stretches follow at residues Val-143–Glu-163 and Val-205–Pro-272. Basic and acidic residues predominate over residues Lys-151–Val-160. Pro residues predominate over residues Glu-263–Pro-272.

The sequence is that of DnaJ-like protein MG200 from Mycoplasma genitalium (strain ATCC 33530 / DSM 19775 / NCTC 10195 / G37) (Mycoplasmoides genitalium).